Reading from the N-terminus, the 172-residue chain is Galectin-related protein (172 aa).

Position 2 is an N-acetylalanine (Ala-2). Ser-22 and Ser-25 each carry phosphoserine. Positions 39–168 (PFCGHIKGGM…TIKINGDLQI (130 aa)) constitute a Galectin domain.

As to quaternary structure, monomer.

Functionally, does not bind lactose, and may not bind carbohydrates. The sequence is that of Galectin-related protein (Lgalsl) from Mus musculus (Mouse).